The following is a 316-amino-acid chain: Methionyl-tRNA formyltransferase (316 aa).

Residue 112 to 115 (SLLP) coordinates (6S)-5,6,7,8-tetrahydrofolate.

The protein belongs to the Fmt family.

The enzyme catalyses L-methionyl-tRNA(fMet) + (6R)-10-formyltetrahydrofolate = N-formyl-L-methionyl-tRNA(fMet) + (6S)-5,6,7,8-tetrahydrofolate + H(+). Functionally, attaches a formyl group to the free amino group of methionyl-tRNA(fMet). The formyl group appears to play a dual role in the initiator identity of N-formylmethionyl-tRNA by promoting its recognition by IF2 and preventing the misappropriation of this tRNA by the elongation apparatus. This Flavobacterium psychrophilum (strain ATCC 49511 / DSM 21280 / CIP 103535 / JIP02/86) protein is Methionyl-tRNA formyltransferase.